The primary structure comprises 180 residues: Segregation and condensation protein B (180 aa).

It belongs to the ScpB family. In terms of assembly, homodimer. Homodimerization may be required to stabilize the binding of ScpA to the Smc head domains. Component of a cohesin-like complex composed of ScpA, ScpB and the Smc homodimer, in which ScpA and ScpB bind to the head domain of Smc. The presence of the three proteins is required for the association of the complex with DNA.

The protein localises to the cytoplasm. Its function is as follows. Participates in chromosomal partition during cell division. May act via the formation of a condensin-like complex containing Smc and ScpA that pull DNA away from mid-cell into both cell halves. The polypeptide is Segregation and condensation protein B (Staphylococcus aureus (strain MSSA476)).